The primary structure comprises 230 residues: MTLLIRDVPQTERPRERFIREGAKALSNQEIVAILLRTGTKQSSALHVASTLLSQFPTLAMFSEAPLEEIQKVPGIGMAKAIELSAAIELGRRIQRETKLVRPVISSPEDAAELVSEDMRGLQQEHFVALYLNTKNHVIKQKTLFIGSLNASIVHPREVFKEALQSSSASVICLHNHPSGDPSPSPEDISVTKRLRQAGAILGIELLDHIIVGDGCFISLKERGFFATIS.

The region spanning 104–226 is the MPN domain; that stretch reads VISSPEDAAE…FISLKERGFF (123 aa). Residues His175, His177, and Asp188 each coordinate Zn(2+). Residues 175–188 carry the JAMM motif motif; that stretch reads HNHPSGDPSPSPED.

The protein belongs to the UPF0758 family.

The chain is UPF0758 protein ABC2615 from Shouchella clausii (strain KSM-K16) (Alkalihalobacillus clausii).